The primary structure comprises 107 residues: Keratin, type I cytoskeletal 20 (107 aa).

A head region spans residues Gly1–Asn7. Residues Glu8–Trp43 are coil 1A. The IF rod domain occupies Glu8–Val107. A linker 1 region spans residues Tyr44–Gln61. Residues Ile62 to Val107 form a coil 1B region.

Belongs to the intermediate filament family. As to quaternary structure, heterotetramer of two type I and two type II keratins. Associates with KRT8.

In terms of biological role, plays a significant role in maintaining keratin filament organization in intestinal epithelia. When phosphorylated, plays a role in the secretion of mucin in the small intestine. The protein is Keratin, type I cytoskeletal 20 of Sus scrofa (Pig).